The primary structure comprises 681 residues: Peroxisomal acyl-coenzyme A oxidase 2 (681 aa).

Phosphoserine occurs at positions 3 and 9. T13 bears the Phosphothreonine mark. N6-succinyllysine occurs at positions 66, 137, 453, and 561. The Microbody targeting signal motif lies at 679-681 (SKL).

This sequence belongs to the acyl-CoA oxidase family. Homodimer. The cofactor is FAD. Present in all tissues tested: heart, brain, placenta, lung, liver, skeletal muscle, kidney and pancreas. Most abundant in heart, liver and kidney.

The protein resides in the peroxisome. It catalyses the reaction (25R)-3alpha,7alpha,12alpha-trihydroxy-5beta-cholestan-26-oyl-CoA + A + H2O = (24R,25R)-3alpha,7alpha,12alpha,24-tetrahydroxy-5beta-cholestan-26-oyl-CoA + AH2. It carries out the reaction (25S)-3alpha,7alpha,12alpha-trihydroxy-5beta-cholestan-26-oyl-CoA + O2 = (24E)-3alpha,7alpha,12alpha-trihydroxy-5beta-cholest-24-en-26-oyl-CoA + H2O2. Oxidizes the CoA esters of the bile acid intermediates di- and tri-hydroxycholestanoic acids. Capable of oxidizing short as well as long chain 2-methyl branched fatty acids. The sequence is that of Peroxisomal acyl-coenzyme A oxidase 2 from Homo sapiens (Human).